The sequence spans 113 residues: uncharacterized protein (113 aa).

A signal peptide spans 1-20; it reads MMKKSILAFLLLTSSAAALA.

This is an uncharacterized protein from Escherichia coli (strain K12).